The following is a 156-amino-acid chain: Small ribosomal subunit protein uS7 (156 aa).

Belongs to the universal ribosomal protein uS7 family. In terms of assembly, part of the 30S ribosomal subunit. Contacts proteins S9 and S11.

Functionally, one of the primary rRNA binding proteins, it binds directly to 16S rRNA where it nucleates assembly of the head domain of the 30S subunit. Is located at the subunit interface close to the decoding center, probably blocks exit of the E-site tRNA. This chain is Small ribosomal subunit protein uS7, found in Nitrobacter hamburgensis (strain DSM 10229 / NCIMB 13809 / X14).